Here is a 465-residue protein sequence, read N- to C-terminus: MDFLPLFHSLQGRLALVVGGGEVALRKARLLADAGARLRVVAPQIHIELRHLVEQGGGELLERDYQDGDQPGCALIIAATDDEPLNAEVSRAANARGIPVNVVDAPALCSVIFPAIVDRSPLVVAVSSGGDAPVLARLIRAKLETWIPSSYGQLAGLASRFRNRVKELLPDLQQRRVFWENLFQGEIAERVLAGRPAEAERLLEERLAGGLAHMATGEVYLVGAGPGDPDLLTFRALRLMQQADVVLYDRLVAPAILELCRRDAERLYVGKRRAEHAVPQERINRLLVELASQGKRVLRLKGGDPFIFGRGGEEIDELAAHGIPFQVVPGITAASGCAAYAGIPLTHRDHAQSVRFVTGHLKDGTTDLPWKDLVAPGQTLVFYMGLVGLPVICEQLVAHGRSAQTPAALIQQGTTAQQRVFSGTLENLPQLVAEHEVHAPTLVIVGEVVQLRDKLAWFEGAREGA.

The segment at 1 to 203 is precorrin-2 dehydrogenase /sirohydrochlorin ferrochelatase; it reads MDFLPLFHSL…GRPAEAERLL (203 aa). Residues 22–23 and 43–44 each bind NAD(+); these read EV and PQ. Ser-128 is modified (phosphoserine). The tract at residues 217 to 465 is uroporphyrinogen-III C-methyltransferase; it reads GEVYLVGAGP…AWFEGAREGA (249 aa). Pro-226 serves as a coordination point for S-adenosyl-L-methionine. The Proton acceptor role is filled by Asp-249. The Proton donor role is filled by Lys-271. S-adenosyl-L-methionine is bound by residues 302–304, Ile-307, 332–333, Met-384, and Gly-413; these read GGD and TA.

It in the N-terminal section; belongs to the precorrin-2 dehydrogenase / sirohydrochlorin ferrochelatase family. In the C-terminal section; belongs to the precorrin methyltransferase family.

The enzyme catalyses uroporphyrinogen III + 2 S-adenosyl-L-methionine = precorrin-2 + 2 S-adenosyl-L-homocysteine + H(+). The catalysed reaction is precorrin-2 + NAD(+) = sirohydrochlorin + NADH + 2 H(+). It carries out the reaction siroheme + 2 H(+) = sirohydrochlorin + Fe(2+). It participates in cofactor biosynthesis; adenosylcobalamin biosynthesis; precorrin-2 from uroporphyrinogen III: step 1/1. The protein operates within cofactor biosynthesis; adenosylcobalamin biosynthesis; sirohydrochlorin from precorrin-2: step 1/1. It functions in the pathway porphyrin-containing compound metabolism; siroheme biosynthesis; precorrin-2 from uroporphyrinogen III: step 1/1. Its pathway is porphyrin-containing compound metabolism; siroheme biosynthesis; siroheme from sirohydrochlorin: step 1/1. It participates in porphyrin-containing compound metabolism; siroheme biosynthesis; sirohydrochlorin from precorrin-2: step 1/1. Functionally, multifunctional enzyme that catalyzes the SAM-dependent methylations of uroporphyrinogen III at position C-2 and C-7 to form precorrin-2 via precorrin-1. Then it catalyzes the NAD-dependent ring dehydrogenation of precorrin-2 to yield sirohydrochlorin. Finally, it catalyzes the ferrochelation of sirohydrochlorin to yield siroheme. The polypeptide is Siroheme synthase (Pseudomonas paraeruginosa (strain DSM 24068 / PA7) (Pseudomonas aeruginosa (strain PA7))).